Consider the following 266-residue polypeptide: MDTILGILNVQKLHTTSKHQENKDKPPETRRRGTINSILLAMSTVFPVFVFFTHREDGFDGNILLRFTTLVFPFSYSAAQHFLLLSSNWGSSCRSSSGLYRALCLALNALLAVFFVISICSLILFTADEWDDNEALTICSMLFPSLLLSSTCLLSISCNFATFQFVDSGPDIPIDLLIFLCLVILHKTSPLEDYEYLPYFAIPSFILVLVRSFKERLLPRKSSPPAAAWRVAVFLLILVLTISVYVFISRVCWAVIESKWEALTSD.

It belongs to the UPF0328 family.

The protein is UPF0328 protein ECU05_1610/ECU11_0120 of Encephalitozoon cuniculi (strain GB-M1) (Microsporidian parasite).